The primary structure comprises 60 residues: Acrosin (60 aa).

N-linked (GlcNAc...) asparagine glycosylation occurs at asparagine 3. The 37-residue stretch at 24-60 (IIGGQDAAHGSWPWMVSLQIFTYHNNRRYHVCGGSLL) folds into the Peptidase S1 domain.

It belongs to the peptidase S1 family. Heavy chain (catalytic) and a light chain linked by two disulfide bonds. Forms a heterodimer with SERPINA5.

The catalysed reaction is Preferential cleavage: Arg-|-Xaa, Lys-|-Xaa.. Inhibited by SERPINA5. In terms of biological role, acrosin is the major protease of mammalian spermatozoa. It is a serine protease of trypsin-like cleavage specificity, it is synthesized in a zymogen form, proacrosin and stored in the acrosome. The polypeptide is Acrosin (ACR) (Capra hircus (Goat)).